A 159-amino-acid chain; its full sequence is Kojic acid related protein 6 (159 aa).

Its function is as follows. Negatively regulates mycelium growth and conidial formation and is required for stress tolerance. Plays a role in kojic acid synthesis in coordination with kojA, kojR and kojT where it acts upstream of kojA. In Aspergillus oryzae (strain ATCC 42149 / RIB 40) (Yellow koji mold), this protein is Kojic acid related protein 6.